Here is a 196-residue protein sequence, read N- to C-terminus: DnaA initiator-associating protein DiaA (196 aa).

The 163-residue stretch at 34-196 (LVQSLLNGNK…DNTLFPHQDD (163 aa)) folds into the SIS domain.

The protein belongs to the SIS family. DiaA subfamily. As to quaternary structure, homotetramer; dimer of dimers.

Functionally, required for the timely initiation of chromosomal replication via direct interactions with the DnaA initiator protein. The chain is DnaA initiator-associating protein DiaA from Shigella boydii serotype 18 (strain CDC 3083-94 / BS512).